The primary structure comprises 611 residues: Inhibitor of apoptosis protein (611 aa).

BIR repeat units lie at residues 30–97, 176–242, and 262–329; these read ELYR…CSFV, EEAR…CPFV, and HEAR…CEYL. Zn(2+)-binding residues include Cys299, Cys302, His319, and Cys326. Positions 446-536 constitute a CARD domain; it reads VASDDLSLIR…VLYKDLFVEK (91 aa). The RING-type zinc-finger motif lies at 564–599; the sequence is CKVCMDKEVSIVFIPCGHLVVCKECAPSLRKCPICR.

The protein belongs to the IAP family. In terms of tissue distribution, cells of the T-lymphocyte lineage. Found in both cortical and medullary cells of the thymus. Expressed at relatively high levels also in spleen, bursa, intestine and lung and at very low levels in testis, brain and skeletal muscle.

It localises to the nucleus. The protein resides in the cytoplasm. In terms of biological role, apoptotic suppressor. The protein is Inhibitor of apoptosis protein (ITA) of Gallus gallus (Chicken).